Reading from the N-terminus, the 350-residue chain is uncharacterized protein (350 aa).

A compositionally biased stretch (basic and acidic residues) spans 197–212 (KNDNSEDNRSEDDLKS). The interval 197 to 217 (KNDNSEDNRSEDDLKSSQDPV) is disordered.

It localises to the plastid. Its subcellular location is the chloroplast. This is an uncharacterized protein from Euglena gracilis.